The following is a 517-amino-acid chain: Diacylglycerol O-acyltransferase 1C (517 aa).

The interval 1–82 is disordered; it reads MAISDVPAAA…NVGAAANDAG (82 aa). A compositionally biased stretch (low complexity) spans 8-17; that stretch reads AAAGTTATTT. The segment covering 53 to 64 has biased composition (basic and acidic residues); it reads ITDDDNIKDHKP. Over residues 71–81 the composition is skewed to low complexity; that stretch reads DDNVGAAANDA. The next 7 membrane-spanning stretches (helical) occupy residues 121–141, 165–185, 197–217, 222–242, 272–292, 305–325, and 361–381; these read HAGL…RLII, WPLF…FVVE, VVVL…VLVI, SAFV…LKLV, YPYT…TLCY, GWVF…GFII, and VWLC…AELV. Residues 388-394 carry the FYXDWWN motif motif; the sequence is FYKDWWN. A run of 3 helical transmembrane segments spans residues 429-449, 451-471, and 484-504; these read GAAS…CIAV, CHMF…LVLI, and VGNM…SVLL. Residue His443 is part of the active site.

The protein belongs to the membrane-bound acyltransferase family. Sterol o-acyltransferase subfamily.

The protein resides in the endoplasmic reticulum membrane. It catalyses the reaction an acyl-CoA + a 1,2-diacyl-sn-glycerol = a triacyl-sn-glycerol + CoA. The protein operates within glycerolipid metabolism; triacylglycerol biosynthesis. Functionally, involved in triacylglycerol (TAG) synthesis. Catalyzes the acylation of the sn-3 hydroxy group of sn-1,2-diacylglycerol using acyl-CoA. This chain is Diacylglycerol O-acyltransferase 1C, found in Glycine max (Soybean).